Consider the following 278-residue polypeptide: Large ribosomal subunit protein uL2 (278 aa).

Disordered regions lie at residues 1 to 20 (MGIR…SVSD) and 225 to 278 (VMNP…GKKR). Residues 258-278 (RNKKKASSRLIVRRRKSGKKR) are compositionally biased toward basic residues.

Belongs to the universal ribosomal protein uL2 family. In terms of assembly, part of the 50S ribosomal subunit. Forms a bridge to the 30S subunit in the 70S ribosome.

In terms of biological role, one of the primary rRNA binding proteins. Required for association of the 30S and 50S subunits to form the 70S ribosome, for tRNA binding and peptide bond formation. It has been suggested to have peptidyltransferase activity; this is somewhat controversial. Makes several contacts with the 16S rRNA in the 70S ribosome. This is Large ribosomal subunit protein uL2 from Cutibacterium acnes (strain DSM 16379 / KPA171202) (Propionibacterium acnes).